Reading from the N-terminus, the 352-residue chain is MVFRIASSPYTHNQRQTSRIMLLVLLAAVPGIAAQLCFFGWGTLVQILLASVSALLAEALVLKLRKQSVAATLKDNSALLTGLLLAVSIPPLAPWWMVVLGTVFAVIIAKQLYGGLGQNPFNPAMIGYVVLLISFPVQMTSWLPPHEIAVNIPGFIDAIQVIFSGHTASGGDMNTLRLGIDGISQATPLDTFKTSVRAGHSVEEIMQYPIYSGMLAGAGWQWVNLAWLAGGVWLLWQKAIRWHIPLSFLVTLALCATLGWLFSPDTLAAPQIHLLSGATMLGAFFILTDPVTASTTNRGRLIFGALAGLLVWLIRSFGGYPDGVAFAVLLANITVPLIDYYTRPRVYGHRKG.

Helical transmembrane passes span Ile20–Gly40, Gly42–Leu62, Ile89–Ala109, and Pro123–Leu143. Thr187 is subject to FMN phosphoryl threonine. Transmembrane regions (helical) follow at residues Leu215 to Leu235, Trp242 to Phe262, Leu267 to Leu287, Leu301 to Pro321, and Asp322 to Thr342.

It belongs to the NqrB/RnfD family. As to quaternary structure, the complex is composed of six subunits: RsxA, RsxB, RsxC, RsxD, RsxE and RsxG. It depends on FMN as a cofactor.

Its subcellular location is the cell inner membrane. Functionally, part of a membrane-bound complex that couples electron transfer with translocation of ions across the membrane. Required to maintain the reduced state of SoxR. In Escherichia coli O7:K1 (strain IAI39 / ExPEC), this protein is Ion-translocating oxidoreductase complex subunit D.